The following is a 109-amino-acid chain: Ferredoxin (109 aa).

4Fe-4S ferredoxin-type domains are found at residues 2-30 (TYVV…YEGE) and 31-60 (FMLV…PESP). [3Fe-4S] cluster-binding residues include C9 and C17. [4Fe-4S] cluster is bound by residues C21, C40, C43, and C46. C50 serves as a coordination point for [3Fe-4S] cluster.

Requires [4Fe-4S] cluster as cofactor. [3Fe-4S] cluster is required as a cofactor.

Ferredoxins are iron-sulfur proteins that transfer electrons in a wide variety of metabolic reactions. The chain is Ferredoxin (fdxA) from Rickettsia felis (strain ATCC VR-1525 / URRWXCal2) (Rickettsia azadi).